The chain runs to 298 residues: GTPase Era (298 aa).

The region spanning 3–170 is the Era-type G domain; that stretch reads KSGFVTIVGR…VELMKKAMPE (168 aa). Positions 11–18 are G1; it reads GRPNVGKS. 11 to 18 is a GTP binding site; that stretch reads GRPNVGKS. A G2 region spans residues 37-41; that stretch reads QTTRN. A G3 region spans residues 58–61; sequence DTPG. Residues 58-62 and 120-123 contribute to the GTP site; these read DTPGI and NKVD. The interval 120-123 is G4; sequence NKVD. Residues 149–151 form a G5 region; that stretch reads ISA. The 78-residue stretch at 201-278 folds into the KH type-2 domain; sequence LRDEVPHGIA…NLKIWVKVRK (78 aa).

The protein belongs to the TRAFAC class TrmE-Era-EngA-EngB-Septin-like GTPase superfamily. Era GTPase family. As to quaternary structure, monomer.

The protein resides in the cytoplasm. It localises to the cell membrane. Its function is as follows. An essential GTPase that binds both GDP and GTP, with rapid nucleotide exchange. Plays a role in 16S rRNA processing and 30S ribosomal subunit biogenesis and possibly also in cell cycle regulation and energy metabolism. The protein is GTPase Era of Clostridium beijerinckii (strain ATCC 51743 / NCIMB 8052) (Clostridium acetobutylicum).